The sequence spans 351 residues: Formyl peptide receptor 2 (351 aa).

At 1 to 29 (MESNYSIHLNGSEVVVYDSTISRVLWILS) the chain is on the extracellular side. N-linked (GlcNAc...) asparagine glycosylation is found at Asn-4 and Asn-10. Residues 30-50 (MVVVSITFFLGVLGNGLVIWV) form a helical membrane-spanning segment. At 51–61 (AGFRMPHTVTT) the chain is on the cytoplasmic side. The chain crosses the membrane as a helical span at residues 62 to 82 (IWYLNLALADFSFTATLPFLL). At 83 to 99 (VEMAMKEKWPFGWFLCK) the chain is on the extracellular side. Cysteines 98 and 176 form a disulfide. Residues 100-120 (LVHIVVDVNLFGSVFLIALIA) traverse the membrane as a helical segment. Topologically, residues 121–144 (LDRCICVLHPVWAQNHRTVSLARK) are cytoplasmic. The chain crosses the membrane as a helical span at residues 145 to 165 (VVVGPWIFALILTLPIFIFLT). At 166-205 (TVRIPGGDVYCTFNFGSWAQTDEEKLNTAITFVTTRGIIR) the chain is on the extracellular side. A helical membrane pass occupies residues 206 to 226 (FLIGFSMPMSIVAVCYGLIAV). At 227–241 (KINRRNLVNSSRPLR) the chain is on the cytoplasmic side. The helical transmembrane segment at 242–262 (VLTAVVASFFICWFPFQLVAL) threads the bilayer. Residues 263 to 282 (LGTVWFKETLLSGSYKILDM) are Extracellular-facing. Residues 283-305 (FVNPTSSLAYFNSCLNPMLYVFM) traverse the membrane as a helical segment. Over 306–351 (GQDFRERFIHSLPYSLERALSEDSGQTSDSSTSSTSPPADIELKAP) the chain is Cytoplasmic. The tract at residues 325-351 (LSEDSGQTSDSSTSSTSPPADIELKAP) is disordered. Residues 327 to 341 (EDSGQTSDSSTSSTS) show a composition bias toward low complexity.

Belongs to the G-protein coupled receptor 1 family. Interacts with Amyloid-beta protein 42, product of APP; the interaction takes place at the cell surface and the complex is then rapidly internalized. As to expression, primarily expressed in neutrophils. Not detected in vomeronasal neurons.

It localises to the cell membrane. Its function is as follows. High affinity receptor for N-formyl-methionyl peptides (FMLP), which are powerful neutrophil chemotactic factors. Stimulates chemotaxis in immune cells to site of infection or tissue damage upon recognition of several ligands, such as FMLP, or ligand involved in cell damage, disease or inflammation. Receptor for the chemokine-like protein FAM19A5, mediating FAM19A5-stimulated macrophage chemotaxis and the inhibitory effect on TNFSF11/RANKL-induced osteoclast differentiation. The protein is Formyl peptide receptor 2 (Fpr2) of Mus musculus (Mouse).